We begin with the raw amino-acid sequence, 68 residues long: Small ribosomal subunit protein bS21 (68 aa).

This sequence belongs to the bacterial ribosomal protein bS21 family.

The chain is Small ribosomal subunit protein bS21 from Endomicrobium trichonymphae.